The sequence spans 254 residues: 5'/3'-nucleotidase SurE (254 aa).

A divalent metal cation is bound by residues D9, D10, S40, and N93.

Belongs to the SurE nucleotidase family. The cofactor is a divalent metal cation.

Its subcellular location is the cytoplasm. It carries out the reaction a ribonucleoside 5'-phosphate + H2O = a ribonucleoside + phosphate. The catalysed reaction is a ribonucleoside 3'-phosphate + H2O = a ribonucleoside + phosphate. The enzyme catalyses [phosphate](n) + H2O = [phosphate](n-1) + phosphate + H(+). Nucleotidase with a broad substrate specificity as it can dephosphorylate various ribo- and deoxyribonucleoside 5'-monophosphates and ribonucleoside 3'-monophosphates with highest affinity to 3'-AMP. Also hydrolyzes polyphosphate (exopolyphosphatase activity) with the preference for short-chain-length substrates (P20-25). Might be involved in the regulation of dNTP and NTP pools, and in the turnover of 3'-mononucleotides produced by numerous intracellular RNases (T1, T2, and F) during the degradation of various RNAs. This chain is 5'/3'-nucleotidase SurE, found in Proteus mirabilis (strain HI4320).